A 341-amino-acid chain; its full sequence is Holliday junction branch migration complex subunit RuvB (341 aa).

The tract at residues 1-180 is large ATPase domain (RuvB-L); that stretch reads MAKSHTLNPE…FGIQLRLDYY (180 aa). Residues L19, R20, G61, K64, T65, T66, R170, Y180, and R217 each contribute to the ATP site. A Mg(2+)-binding site is contributed by T65. A small ATPAse domain (RuvB-S) region spans residues 181–251; sequence NDEEMKEIVL…LCLKAFEKMG (71 aa). The tract at residues 254 to 341 is head domain (RuvB-H); the sequence is DLGLDGMDRQ…ENHGQDPTLF (88 aa). Residues R309 and R314 each coordinate DNA.

The protein belongs to the RuvB family. In terms of assembly, homohexamer. Forms an RuvA(8)-RuvB(12)-Holliday junction (HJ) complex. HJ DNA is sandwiched between 2 RuvA tetramers; dsDNA enters through RuvA and exits via RuvB. An RuvB hexamer assembles on each DNA strand where it exits the tetramer. Each RuvB hexamer is contacted by two RuvA subunits (via domain III) on 2 adjacent RuvB subunits; this complex drives branch migration. In the full resolvosome a probable DNA-RuvA(4)-RuvB(12)-RuvC(2) complex forms which resolves the HJ.

It is found in the cytoplasm. The catalysed reaction is ATP + H2O = ADP + phosphate + H(+). Its function is as follows. The RuvA-RuvB-RuvC complex processes Holliday junction (HJ) DNA during genetic recombination and DNA repair, while the RuvA-RuvB complex plays an important role in the rescue of blocked DNA replication forks via replication fork reversal (RFR). RuvA specifically binds to HJ cruciform DNA, conferring on it an open structure. The RuvB hexamer acts as an ATP-dependent pump, pulling dsDNA into and through the RuvAB complex. RuvB forms 2 homohexamers on either side of HJ DNA bound by 1 or 2 RuvA tetramers; 4 subunits per hexamer contact DNA at a time. Coordinated motions by a converter formed by DNA-disengaged RuvB subunits stimulates ATP hydrolysis and nucleotide exchange. Immobilization of the converter enables RuvB to convert the ATP-contained energy into a lever motion, pulling 2 nucleotides of DNA out of the RuvA tetramer per ATP hydrolyzed, thus driving DNA branch migration. The RuvB motors rotate together with the DNA substrate, which together with the progressing nucleotide cycle form the mechanistic basis for DNA recombination by continuous HJ branch migration. Branch migration allows RuvC to scan DNA until it finds its consensus sequence, where it cleaves and resolves cruciform DNA. The polypeptide is Holliday junction branch migration complex subunit RuvB (Leptospira borgpetersenii serovar Hardjo-bovis (strain L550)).